The primary structure comprises 415 residues: Beta-2 adrenergic receptor (415 aa).

Residues 1–34 (MGQPANRSVFLLAPNGSHAPDQGDSQERSEAWVV) are Extracellular-facing. 2 N-linked (GlcNAc...) asparagine glycosylation sites follow: Asn6 and Asn15. The chain crosses the membrane as a helical span at residues 35–58 (GMGIVMSLIVLAIVFGNVLVITAI). The Cytoplasmic segment spans residues 59–71 (ARFERLQTVTNYF). A helical membrane pass occupies residues 72 to 95 (ITSLACADLVMGLAVVPFGASHIL). Residues 96-106 (MKMWTFGNFWC) lie on the Extracellular side of the membrane. 2 disulfides stabilise this stretch: Cys106–Cys191 and Cys184–Cys190. The helical transmembrane segment at 107-129 (EFWTSIDVLCVTASIETLCVIAV) threads the bilayer. Residues 130 to 150 (DRYFAITSPFKYQSLLTKNKA) lie on the Cytoplasmic side of the membrane. Residue Tyr141 is modified to Phosphotyrosine. Residues 151 to 174 (RVVILMVWIVSGLTSFLPIQMHWY) form a helical membrane-spanning segment. Residues 175–196 (RATHQEAINCYAKETCCDFFTN) lie on the Extracellular side of the membrane. A helical transmembrane segment spans residues 197-220 (QAYAIASSIVSFYLPLVVMVFVYS). At 221 to 274 (RVFQVAQRQLQKIDRSEGRFHAQNLSQVEQDGRSGHGHRRSSKFCLKEHKALKT) the chain is on the cytoplasmic side. At Ser246 the chain carries Phosphoserine. Phosphoserine; by PKA occurs at positions 261 and 262. Cys265 carries the S-palmitoyl cysteine lipid modification. A helical membrane pass occupies residues 275-298 (LGIIMGTFTLCWLPFFIVNIVHVI). The Extracellular segment spans residues 299 to 305 (QDNLIPK). Residues 306-329 (EVYILLNWVGYVNSAFNPLIYCRS) traverse the membrane as a helical segment. The Cytoplasmic portion of the chain corresponds to 330–415 (PDFRIAFQEL…RNCSTNDSLL (86 aa)). The S-palmitoyl cysteine moiety is linked to residue Cys341. 2 positions are modified to phosphoserine; by PKA: Ser345 and Ser346. Ser355 is modified (phosphoserine; by BARK). The segment at 379 to 415 (SELLCEDPPGTEDRQGTVPSDSVDSQGRNCSTNDSLL) is disordered. Residues Pro387 and Pro397 each carry the 4-hydroxyproline modification. The segment covering 395–415 (TVPSDSVDSQGRNCSTNDSLL) has biased composition (polar residues). The PDZ-binding motif lies at 412-415 (DSLL).

It belongs to the G-protein coupled receptor 1 family. Adrenergic receptor subfamily. ADRB2 sub-subfamily. In terms of assembly, binds NHERF1 and GPRASP1. Interacts with ARRB1 and ARRB2. Interacts with SRC. Interacts with USP20 and USP33. Interacts with VHL; the interaction, which is increased on hydroxylation of ADRB2, ubiquitinates ADRB2 leading to its degradation. Interacts with EGLN3; the interaction hydroxylates ADRB2 facilitating VHL-E3 ligase-mediated ubiquitination. Interacts (via PDZ-binding motif) with SNX27 (via PDZ domain); the interaction is required when endocytosed to prevent degradation in lysosomes and promote recycling to the plasma membrane. Interacts with CNIH4. Interacts with ARRDC3. Interacts with NEDD4. Interacts with MARCHF2. In terms of processing, palmitoylated; may reduce accessibility of Ser-345 and Ser-346 by anchoring Cys-341 to the plasma membrane. Agonist stimulation promotes depalmitoylation and further allows Ser-345 and Ser-346 phosphorylation. Phosphorylated by PKA and BARK upon agonist stimulation, which mediates homologous desensitization of the receptor. PKA-mediated phosphorylation seems to facilitate phosphorylation by BARK. Post-translationally, phosphorylation of Tyr-141 is induced by insulin and leads to supersensitization of the receptor. In terms of processing, polyubiquitinated. Agonist-induced ubiquitination leads to sort internalized receptors to the lysosomes for degradation. Deubiquitination by USP20 and USP33, leads to ADRB2 recycling and resensitization after prolonged agonist stimulation. USP20 and USP33 are constitutively associated and are dissociated immediately after agonist stimulation. Ubiquitination by the VHL-E3 ligase complex is oxygen-dependent. Hydroxylation by EGLN3 occurs only under normoxia and increases the interaction with VHL and the subsequent ubiquitination and degradation of ADRB2. Post-translationally, palmitoylated. Mainly palmitoylated at Cys-341. Palmitoylation may reduce accessibility of phosphorylation sites by anchoring the receptor to the plasma membrane. Agonist stimulation promotes depalmitoylation and further allows Ser-345 and Ser-346 phosphorylation. Also undergoes transient, ligand-induced palmitoylation at Cys-265 probably by ZDHHC9, ZDHHC14 and ZDHHC18 within the Golgi. Palmitoylation at Cys-265 requires phosphorylation by PKA and receptor internalization and stabilizes the receptor. Could be depalmitoylated by LYPLA1 at the plasma membrane.

Its subcellular location is the cell membrane. The protein resides in the early endosome. It is found in the golgi apparatus. In terms of biological role, beta-adrenergic receptors mediate the catecholamine-induced activation of adenylate cyclase through the action of G proteins. The beta-2-adrenergic receptor binds epinephrine with an approximately 30-fold greater affinity than it does norepinephrine. The chain is Beta-2 adrenergic receptor (ADRB2) from Canis lupus familiaris (Dog).